The chain runs to 335 residues: Glycerol-3-phosphate dehydrogenase [NAD(P)+] (335 aa).

Positions 10, 11, 31, and 105 each coordinate NADPH. 3 residues coordinate sn-glycerol 3-phosphate: Lys-105, Gly-136, and Ser-138. An NADPH-binding site is contributed by Ala-140. Sn-glycerol 3-phosphate is bound by residues Lys-191, Asp-244, Ser-254, Arg-255, and Asn-256. Lys-191 serves as the catalytic Proton acceptor. Arg-255 contacts NADPH. 2 residues coordinate NADPH: Val-279 and Glu-281.

Belongs to the NAD-dependent glycerol-3-phosphate dehydrogenase family.

Its subcellular location is the cytoplasm. The enzyme catalyses sn-glycerol 3-phosphate + NAD(+) = dihydroxyacetone phosphate + NADH + H(+). The catalysed reaction is sn-glycerol 3-phosphate + NADP(+) = dihydroxyacetone phosphate + NADPH + H(+). It functions in the pathway membrane lipid metabolism; glycerophospholipid metabolism. Functionally, catalyzes the reduction of the glycolytic intermediate dihydroxyacetone phosphate (DHAP) to sn-glycerol 3-phosphate (G3P), the key precursor for phospholipid synthesis. In Leptospira interrogans serogroup Icterohaemorrhagiae serovar copenhageni (strain Fiocruz L1-130), this protein is Glycerol-3-phosphate dehydrogenase [NAD(P)+].